The following is a 91-amino-acid chain: Sec-independent protein translocase protein TatAt (91 aa).

A helical transmembrane segment spans residues 9–29 (FPGLPGGPELLVVLLIVVLLF). The interval 48–91 (FQRGREEIEDELQDMTGDDDEDDATSESSADSVSTDSVSTESSN) is disordered. The segment covering 54–72 (EIEDELQDMTGDDDEDDAT) has biased composition (acidic residues). Over residues 73 to 91 (SESSADSVSTDSVSTESSN) the composition is skewed to low complexity.

It belongs to the TatA/E family. As to quaternary structure, forms a complex with TatC. Cytoplasmic and membrane-bound TatA form high-molecular-weight complexes.

It is found in the cell membrane. The protein localises to the cytoplasm. Part of the twin-arginine translocation (Tat) system that transports large folded proteins containing a characteristic twin-arginine motif in their signal peptide across membranes. TatA could form the protein-conducting channel of the Tat system. The protein is Sec-independent protein translocase protein TatAt of Haloferax volcanii (strain ATCC 29605 / DSM 3757 / JCM 8879 / NBRC 14742 / NCIMB 2012 / VKM B-1768 / DS2) (Halobacterium volcanii).